Reading from the N-terminus, the 83-residue chain is uncharacterized protein (83 aa).

The helical transmembrane segment at 24 to 44 (AMTLLIITNTLLIILSYSVLL) threads the bilayer.

It localises to the host membrane. This is an uncharacterized protein from Acidianus sp. F28 (AFV-2).